The chain runs to 213 residues: Cell division protein SepF (213 aa).

The disordered stretch occupies residues 27-103 (VDAPAPRRAP…GSLRGSAPTR (77 aa)). 2 stretches are compositionally biased toward basic and acidic residues: residues 35-51 (APVE…RFAD) and 72-90 (DEDR…DRPA).

The protein belongs to the SepF family. Homodimer. Interacts with FtsZ.

The protein resides in the cytoplasm. In terms of biological role, cell division protein that is part of the divisome complex and is recruited early to the Z-ring. Probably stimulates Z-ring formation, perhaps through the cross-linking of FtsZ protofilaments. Its function overlaps with FtsA. This Mycobacteroides abscessus (strain ATCC 19977 / DSM 44196 / CCUG 20993 / CIP 104536 / JCM 13569 / NCTC 13031 / TMC 1543 / L948) (Mycobacterium abscessus) protein is Cell division protein SepF.